A 155-amino-acid polypeptide reads, in one-letter code: MRTSMRISLRLLALLACAICSQASLERENNEGTNMANHKLSGVIQWKYEKRPFCNAFTGCGRKRTYPSYPPFSLFKRNEVEEKPYNNEYLSEGLSDLIDINAEPAVENVQKQIMSQAKIFEAIKEASKEIFRQKNKQKMLQNEKEMQQLEERESK.

The signal sequence occupies residues 1–23 (MRTSMRISLRLLALLACAICSQA). Positions 24 to 49 (SLERENNEGTNMANHKLSGVIQWKYE) are excised as a propeptide. Cys-54 and Cys-60 are oxidised to a cystine. At Cys-60 the chain carries Cysteine amide. Positions 64–155 (RTYPSYPPFS…MQQLEERESK (92 aa)) are excised as a propeptide. Residues 135–155 (NKQKMLQNEKEMQQLEERESK) are disordered. The span at 141-155 (QNEKEMQQLEERESK) shows a compositional bias: basic and acidic residues.

In terms of tissue distribution, central nervous system; most neurons exhibit coexpression with Burs.

It is found in the secreted. Its function is as follows. Cardioregulatory neurohormone that increases heart beat rate during adult wing inflation; has no effect on beat amplitude. The effect of CCAP is both ino- and chronotropic. This is Cardioactive peptide from Drosophila melanogaster (Fruit fly).